The primary structure comprises 266 residues: Nitrate import ATP-binding protein NrtD (266 aa).

The ABC transporter domain maps to 3-234 (LEITDLNRVF…DEETPKNRTY (232 aa)). 39-46 (GASGSGKS) contributes to the ATP binding site.

The protein belongs to the ABC transporter superfamily. Nitrate/nitrite/cyanate uptake transporter (NitT) (TC 3.A.1.16) family. As to quaternary structure, the complex is composed of two ATP-binding proteins (NrtC and NrtD), two transmembrane proteins (NrtB) and a solute-binding protein (NrtA).

It localises to the cell inner membrane. The enzyme catalyses nitrate(out) + ATP + H2O = nitrate(in) + ADP + phosphate + H(+). In terms of biological role, part of the ABC transporter complex NrtABCD involved in nitrate uptake. The complex is probably also involved in nitrite transport. Probably responsible for energy coupling to the transport system. In Synechocystis sp. (strain ATCC 27184 / PCC 6803 / Kazusa), this protein is Nitrate import ATP-binding protein NrtD (nrtD).